Reading from the N-terminus, the 183-residue chain is dTTP/UTP pyrophosphatase (183 aa).

Asp-64 acts as the Proton acceptor in catalysis.

It belongs to the Maf family. YhdE subfamily. A divalent metal cation is required as a cofactor.

The protein resides in the cytoplasm. It catalyses the reaction dTTP + H2O = dTMP + diphosphate + H(+). The enzyme catalyses UTP + H2O = UMP + diphosphate + H(+). Functionally, nucleoside triphosphate pyrophosphatase that hydrolyzes dTTP and UTP. May have a dual role in cell division arrest and in preventing the incorporation of modified nucleotides into cellular nucleic acids. This is dTTP/UTP pyrophosphatase from Acinetobacter baylyi (strain ATCC 33305 / BD413 / ADP1).